The chain runs to 237 residues: Protein ULTRAPETALA 1 (237 aa).

The region spanning 18–116 (EELQEMSGVN…SKTVLLKYYN (99 aa)) is the SAND domain. Residues 133–191 (VCHRDEFVGCNDCGKERRFRLRSRDECRLHHNAMGDPNWKCSDFPYDKITCEEEEERGS) form a CW-type zinc finger.

Interacts with HHO5. Associates with ATX1 for trimethylating 'Lys-4' on histone H3 (H3K4me3) at flower MADS box gene loci. As to expression, expressed at low levels in seedlings, roots, shoots, leaves, stems, inflorescences, pollen, flowers and siliques, with highest levels dividing tissues including inflorescence.

It localises to the cytoplasm. It is found in the nucleus. In terms of biological role, putative transcription factor that acts as a key negative regulator of cell accumulation in shoot and floral meristems. Negatively regulates the size of the WUSCHEL (WUS)-expressing organizing center in inflorescence meristems. May act by down-regulating expression of WUS. Acts as an antirepressor that counteracts EMF1 action through modulation of trimethylated 'Lys-4' on histone H3 (H3K4me3) marks on target gene loci (including genes involved in salt stress response and flower development). Collaboratively with RBL and CYP40/SQN, influences floral meristem (FM) determinacy in an AGAMOUS and SUPERMAN-dependent manner, thus contributing to the floral developmental homeostasis. This chain is Protein ULTRAPETALA 1, found in Arabidopsis thaliana (Mouse-ear cress).